The primary structure comprises 511 residues: Maturase K (511 aa).

The protein belongs to the intron maturase 2 family. MatK subfamily.

Its subcellular location is the plastid. It is found in the chloroplast. Its function is as follows. Usually encoded in the trnK tRNA gene intron. Probably assists in splicing its own and other chloroplast group II introns. This is Maturase K from Phleum pratense (Common timothy).